Here is an 83-residue protein sequence, read N- to C-terminus: Exodeoxyribonuclease 7 small subunit (83 aa).

This sequence belongs to the XseB family. In terms of assembly, heterooligomer composed of large and small subunits.

The protein localises to the cytoplasm. It carries out the reaction Exonucleolytic cleavage in either 5'- to 3'- or 3'- to 5'-direction to yield nucleoside 5'-phosphates.. Functionally, bidirectionally degrades single-stranded DNA into large acid-insoluble oligonucleotides, which are then degraded further into small acid-soluble oligonucleotides. The polypeptide is Exodeoxyribonuclease 7 small subunit (Allorhizobium ampelinum (strain ATCC BAA-846 / DSM 112012 / S4) (Agrobacterium vitis (strain S4))).